A 193-amino-acid chain; its full sequence is dCTP deaminase (193 aa).

Residues 110-115, Asp128, 136-138, Tyr171, Lys178, and Gln182 contribute to the dCTP site; these read RSSLAR and VLE. Glu138 serves as the catalytic Proton donor/acceptor. The segment at 171-193 is disordered; sequence YHQRQDAKYHNQKGAVASRIDKD.

This sequence belongs to the dCTP deaminase family. As to quaternary structure, homotrimer.

The enzyme catalyses dCTP + H2O + H(+) = dUTP + NH4(+). It participates in pyrimidine metabolism; dUMP biosynthesis; dUMP from dCTP (dUTP route): step 1/2. Its function is as follows. Catalyzes the deamination of dCTP to dUTP. In Hamiltonella defensa subsp. Acyrthosiphon pisum (strain 5AT), this protein is dCTP deaminase.